Consider the following 216-residue polypeptide: Calcium-binding protein 2 (216 aa).

The segment at 1–41 (MGNCAKTPWHRGSKERWQWPGSPLGGSRPSPGPRTEEQEGT) is disordered. Gly-2 carries N-myristoyl glycine lipidation. A compositionally biased stretch (low complexity) spans 20–29 (PGSPLGGSRP). 4 EF-hand domains span residues 74-109 (EEIE…LGYM), 125-142 (GKVD…KLLA), 148-183 (IGVR…LLGE), and 185-216 (LSQR…MMSR). Residues Asp-87, Asp-89, Asp-91, Tyr-93, and Glu-98 each coordinate Ca(2+). 9 residues coordinate Ca(2+): Asp-161, Asn-163, Asp-165, Cys-167, Glu-172, Asp-198, Asn-200, Asp-202, and Glu-209.

In terms of tissue distribution, expressed in the inner hair cells (IHCs), outer hair cells,(OHCs) and vestibular hair cells within the ear and in the retina (at protein level). Expressed in the retinal cone type 6 ON-bipolar cells and type 1 OFF-bipolar cells (at protein level). Expressed in the organ of Corti and spiral ganglion neurons in the cochlea (at protein level).

It localises to the cytoplasm. The protein localises to the perinuclear region. It is found in the cell membrane. Its subcellular location is the golgi apparatus. Required for sound encoding at inner hair cells (IHCs) synapses, likely via inhibition of the inactivation of voltage-gated calcium channel of type 1.3 (Cav1.3) in the IHCs. Required for the normal transfer of light signals through the retina. In Mus musculus (Mouse), this protein is Calcium-binding protein 2 (Cabp2).